Consider the following 315-residue polypeptide: Serpentine receptor class delta-31 (315 aa).

Transmembrane regions (helical) follow at residues 6 to 26 (LHSI…YLAI), 38 to 58 (AIIT…FFVM), 83 to 103 (ACYV…IWMI), 124 to 144 (VFVA…WFSI), 174 to 194 (ITLI…YIWI), 225 to 245 (FQVF…SMFT), and 256 to 276 (AISV…ILFV).

It belongs to the nematode receptor-like protein srd family.

It localises to the membrane. This chain is Serpentine receptor class delta-31 (srd-31), found in Caenorhabditis elegans.